The chain runs to 197 residues: Recombination protein RecR (197 aa).

Residues C56 to C71 form a C4-type zinc finger. Residues R79 to P174 enclose the Toprim domain.

This sequence belongs to the RecR family.

May play a role in DNA repair. It seems to be involved in an RecBC-independent recombinational process of DNA repair. It may act with RecF and RecO. The chain is Recombination protein RecR from Myxococcus xanthus (strain DK1622).